The primary structure comprises 400 residues: MEKPSRNTYIPLTIVGECPECREYHRGRECPECGQDLRRPRLRPQFGGRGPHTLFYLEKYDWDTMKAVRRIAQALRKHHRHFGIAGMKDKRAVTSQRVTVRGVPPGVLARLRIRDLKIVPMGRARRKLRPGDLWGNRFVITVRGAKVRRLPEALRTVRELGGVPNYYGLQRFGSRRPVTHVVGKYVVLEDWEKAVKTFLTLEYPRESPEALEARRWLKEHWGEFKEALRRFPKFLDYERHILEHLARHPHDYINAFRRLPMWIRRMFVHAYQSYLFNRILSERIARGLPVHRPVEGDVTQDGLPTVPLPGFRTELSDGPQGEIEREVLEEEGVRLEDFEIKSMPELSAGGDRKPALLRVYGLRAEAIGDDTVRFTFSLPRGGYATTVLRELLGSEGVYAD.

The Nucleophile role is filled by aspartate 89. The region spanning glycine 162 to leucine 357 is the TRUD domain.

This sequence belongs to the pseudouridine synthase TruD family.

The enzyme catalyses uridine(13) in tRNA = pseudouridine(13) in tRNA. Its function is as follows. Could be responsible for synthesis of pseudouridine from uracil-13 in transfer RNAs. The chain is Probable tRNA pseudouridine synthase D from Methanopyrus kandleri (strain AV19 / DSM 6324 / JCM 9639 / NBRC 100938).